Consider the following 263-residue polypeptide: Indolethylamine N-methyltransferase (263 aa).

An N6-succinyllysine modification is found at Lys-13. Residues Tyr-20, Tyr-25, 63 to 64 (GS), Tyr-69, Asp-85, and Asn-90 each bind S-adenosyl-L-methionine. At Lys-96 the chain carries N6-succinyllysine. Residues 142-143 (DV) and Leu-163 contribute to the S-adenosyl-L-methionine site.

Belongs to the class I-like SAM-binding methyltransferase superfamily. NNMT/PNMT/TEMT family. In terms of assembly, monomer.

Its subcellular location is the cytoplasm. It catalyses the reaction a tertiary amine + S-adenosyl-L-methionine = a methylated tertiary amine + S-adenosyl-L-homocysteine + H(+). It carries out the reaction a secondary amine + S-adenosyl-L-methionine = a methylated secondary amine + S-adenosyl-L-homocysteine + H(+). The enzyme catalyses a primary amine + S-adenosyl-L-methionine = a methylated primary amine + S-adenosyl-L-homocysteine + H(+). The catalysed reaction is dimethyl sulfide + S-adenosyl-L-methionine = trimethylsulfonium + S-adenosyl-L-homocysteine. Functionally, catalyzes the N-methylation of tryptamine and structurally related compounds. Functions as a thioether S-methyltransferase and is active with a variety of thioethers and the corresponding selenium and tellurium compounds, including 3-methylthiopropionaldehyde, dimethyl selenide, dimethyl telluride, 2-methylthioethylamine, 2-methylthioethanol, methyl-n-propyl sulfide and diethyl sulfide. Plays an important role in the detoxification of selenium compounds. This Pongo abelii (Sumatran orangutan) protein is Indolethylamine N-methyltransferase (INMT).